The primary structure comprises 207 residues: Calcipressin-like protein (207 aa).

The required for tax-6 interaction stretch occupies residues proline 176 to histidine 181.

The protein belongs to the RCAN family. As to quaternary structure, interacts with tax-6 (via catalytic domain); the interaction is calcium-dependent. As to expression, expressed in lateral hypodermal cells, marginal cells of the pharynx, vulva epithelial cells, ventral and dorsal nerve cords and commissures and various neurons in the anterior and posterior regions. Expressed in male tail structures including the diagonal muscles, sensory rays and spicules. Expressed in PHC neurons and most tail neurons and support cells of the phasmid neurons. Also expressed in pharyngeal muscle, head neurons, excretory canal cells and hypodermal seam cells.

Functionally, inhibits tax-6/calcineurin A phosphatase activity and thereby negatively regulates calcineurin-mediated functions. Plays a role in modulating temperature-dependent calcium responses in AFD neurons and in addition, also negatively regulates thermotaxis in a tax-6-dependent manner in AFD neurons. In response to changes in intracellular calcium levels may also regulate nuclear translocation of transcriptional regulators such as crtc-1. May play a role in regulating body size. Plays a role in male tail tip morphogenesis. This chain is Calcipressin-like protein, found in Caenorhabditis elegans.